We begin with the raw amino-acid sequence, 464 residues long: Glutathione reductase (464 aa).

Serine 17 and glycine 18 together coordinate FAD. Serine 17 is a binding site for glutathione. Arginine 24 serves as a coordination point for glutathione. 4 residues coordinate FAD: glutamate 37, threonine 45, cysteine 46, and lysine 54. A disulfide bond links cysteine 46 and cysteine 51. Tyrosine 103 is a glutathione binding site. Alanine 119 contacts FAD. NADP(+) contacts are provided by alanine 186, isoleucine 189, glutamate 192, arginine 209, arginine 215, and glycine 274. Aspartate 315 lines the FAD pocket. Position 321 (glutamate 321) interacts with NADP(+). Residue threonine 323 coordinates FAD. Position 331 (arginine 331) interacts with glutathione. Valine 354 is an NADP(+) binding site. Residue histidine 453 coordinates FAD. Catalysis depends on histidine 453, which acts as the Proton acceptor.

The protein belongs to the class-I pyridine nucleotide-disulfide oxidoreductase family. Homodimer. FAD is required as a cofactor.

Its subcellular location is the cytoplasm. It localises to the mitochondrion. It carries out the reaction 2 glutathione + NADP(+) = glutathione disulfide + NADPH + H(+). Its function is as follows. Catalyzes the reduction of glutathione disulfide (GSSG) to reduced glutathione (GSH). Constitutes the major mechanism to maintain a high GSH:GSSG ratio in the cytosol. The protein is Glutathione reductase (pgr1) of Schizosaccharomyces pombe (strain 972 / ATCC 24843) (Fission yeast).